The following is a 398-amino-acid chain: Succinyl-diaminopimelate desuccinylase (398 aa).

His-68 provides a ligand contact to Zn(2+). Residue Asp-70 is part of the active site. Position 101 (Asp-101) interacts with Zn(2+). Residue Glu-135 is the Proton acceptor of the active site. Zn(2+)-binding residues include Glu-136, Glu-164, and His-349.

It belongs to the peptidase M20A family. DapE subfamily. Homodimer. The cofactor is Zn(2+). Co(2+) is required as a cofactor.

The catalysed reaction is N-succinyl-(2S,6S)-2,6-diaminopimelate + H2O = (2S,6S)-2,6-diaminopimelate + succinate. The protein operates within amino-acid biosynthesis; L-lysine biosynthesis via DAP pathway; LL-2,6-diaminopimelate from (S)-tetrahydrodipicolinate (succinylase route): step 3/3. In terms of biological role, catalyzes the hydrolysis of N-succinyl-L,L-diaminopimelic acid (SDAP), forming succinate and LL-2,6-diaminopimelate (DAP), an intermediate involved in the bacterial biosynthesis of lysine and meso-diaminopimelic acid, an essential component of bacterial cell walls. The sequence is that of Succinyl-diaminopimelate desuccinylase from Wolbachia pipientis subsp. Culex pipiens (strain wPip).